The sequence spans 308 residues: Cyclin-D2-1 (308 aa).

The tract at residues 286–308 is disordered; that stretch reads EGLSYDSSSPPPPKRRKRSPPGT. Over residues 298–308 the composition is skewed to basic residues; that stretch reads PKRRKRSPPGT.

The protein belongs to the cyclin family. Cyclin D subfamily.

The protein is Cyclin-D2-1 (CYCD2-1) of Oryza sativa subsp. japonica (Rice).